The following is a 341-amino-acid chain: L-threonine 3-dehydrogenase (341 aa).

A Zn(2+)-binding site is contributed by cysteine 38. Residues threonine 40 and histidine 43 each act as charge relay system in the active site. Zn(2+) is bound by residues histidine 63, glutamate 64, cysteine 93, cysteine 96, cysteine 99, and cysteine 107. Residues isoleucine 175, aspartate 195, arginine 200, 262 to 264 (LGI), and 286 to 287 (IY) contribute to the NAD(+) site.

Belongs to the zinc-containing alcohol dehydrogenase family. Homotetramer. Zn(2+) serves as cofactor.

It is found in the cytoplasm. The enzyme catalyses L-threonine + NAD(+) = (2S)-2-amino-3-oxobutanoate + NADH + H(+). Its pathway is amino-acid degradation; L-threonine degradation via oxydo-reductase pathway; glycine from L-threonine: step 1/2. Catalyzes the NAD(+)-dependent oxidation of L-threonine to 2-amino-3-ketobutyrate. This is L-threonine 3-dehydrogenase from Salmonella gallinarum (strain 287/91 / NCTC 13346).